A 1342-amino-acid chain; its full sequence is DNA-directed RNA polymerase subunit beta (1342 aa).

It belongs to the RNA polymerase beta chain family. In terms of assembly, the RNAP catalytic core consists of 2 alpha, 1 beta, 1 beta' and 1 omega subunit. When a sigma factor is associated with the core the holoenzyme is formed, which can initiate transcription.

The catalysed reaction is RNA(n) + a ribonucleoside 5'-triphosphate = RNA(n+1) + diphosphate. Functionally, DNA-dependent RNA polymerase catalyzes the transcription of DNA into RNA using the four ribonucleoside triphosphates as substrates. In Klebsiella pneumoniae (strain 342), this protein is DNA-directed RNA polymerase subunit beta.